Reading from the N-terminus, the 162-residue chain is Phosphopantetheine adenylyltransferase (162 aa).

S11 contacts substrate. ATP is bound by residues S11–F12 and H19. Substrate contacts are provided by K43, V76, and R90. ATP-binding positions include G91–R93, E101, and H126–S132.

This sequence belongs to the bacterial CoaD family. In terms of assembly, homohexamer. Requires Mg(2+) as cofactor.

The protein localises to the cytoplasm. The enzyme catalyses (R)-4'-phosphopantetheine + ATP + H(+) = 3'-dephospho-CoA + diphosphate. It participates in cofactor biosynthesis; coenzyme A biosynthesis; CoA from (R)-pantothenate: step 4/5. In terms of biological role, reversibly transfers an adenylyl group from ATP to 4'-phosphopantetheine, yielding dephospho-CoA (dPCoA) and pyrophosphate. This chain is Phosphopantetheine adenylyltransferase, found in Streptococcus pneumoniae (strain ATCC 700669 / Spain 23F-1).